A 225-amino-acid chain; its full sequence is Uracil-DNA glycosylase (225 aa).

Residue D64 is the Proton acceptor of the active site.

It belongs to the uracil-DNA glycosylase (UDG) superfamily. UNG family.

It localises to the cytoplasm. It carries out the reaction Hydrolyzes single-stranded DNA or mismatched double-stranded DNA and polynucleotides, releasing free uracil.. Functionally, excises uracil residues from the DNA which can arise as a result of misincorporation of dUMP residues by DNA polymerase or due to deamination of cytosine. This Lachnoclostridium phytofermentans (strain ATCC 700394 / DSM 18823 / ISDg) (Clostridium phytofermentans) protein is Uracil-DNA glycosylase.